The primary structure comprises 496 residues: Germacrene A hydroxylase (496 aa).

Residues 1–2 (ME) lie on the Cytoplasmic side of the membrane. Residues 3–23 (LTLTTSLGLAVFVFILFKLLT) traverse the membrane as a helical; Signal-anchor for type II membrane protein segment. The Lumenal portion of the chain corresponds to 24–496 (GSKSTKNSLP…TAYKTANNSA (473 aa)). Heme is bound at residue Cys-432. Asn-493 is a glycosylation site (N-linked (GlcNAc...) asparagine).

This sequence belongs to the cytochrome P450 family. The cofactor is heme.

Its subcellular location is the endoplasmic reticulum membrane. The catalysed reaction is (+)-(R)-germacrene A + 3 reduced [NADPH--hemoprotein reductase] + 3 O2 = germacra-1(10),4,11(13)-trien-12-oate + 3 oxidized [NADPH--hemoprotein reductase] + 4 H2O + 4 H(+). It participates in secondary metabolite biosynthesis; terpenoid biosynthesis. Functionally, involved in the biosynthesis of germacrene-derived sesquiterpene lactones. Catalyzes three consecutive oxidations of germacrene A to produce germacrene A acid. Could also catalyze the three-step oxidation of non-natural substrate amorphadiene to artemisinic acid. The sequence is that of Germacrene A hydroxylase from Barnadesia spinosa (Spiny barnadesia).